Here is a 537-residue protein sequence, read N- to C-terminus: MDCMITKLNEKDQFISKIKDSDSKIGQFYHFDAMQEKSYSERLSMSNNGREVALAQVIKNYMSDLTLTEKQLQNISLLSEGAKVIIGGQQAGLFGGPLYTFHKIFSIITMSEKLSKDYNTNVIPVFWIAGEDHDFDEVNHTYAYNAQNAKLQKIKYHTMTPPEASVSTYYPDKAQLKDALKLFFKEMNETTHSKQMIEMCTKIIDQYDSWTDMFKALLNEVFKAYGLLLIDANNTELRKLEQPFIQKIIEHHQDVDASFRNNQQNTIANGLEQMIQTDTNVHLFLHEDNMRQLLTFKDNQFYLSKSDKYMTKEELLKILEVEPERFSNNVVTRPIMEEWLFNTVAFIGGPSEIKYWTELSEVFNTLDVSMPIVLPRLRISYLYPRTEKLLSQYQLKQHSIIEQGIEKDKEKFIRAQASQTFVDKVEEIKVQQEKLYQSLLTEVAGNNDNQLLVEKNNHIHQKQYEYLINRYLLNIERKNEISMKHFKELSETLHPMGGLQERIWNPLQIMNDFGIDVFSPSTYPPLSYTFDHIIVKP.

This sequence belongs to the BshC family.

In terms of biological role, involved in bacillithiol (BSH) biosynthesis. May catalyze the last step of the pathway, the addition of cysteine to glucosamine malate (GlcN-Mal) to generate BSH. This Staphylococcus saprophyticus subsp. saprophyticus (strain ATCC 15305 / DSM 20229 / NCIMB 8711 / NCTC 7292 / S-41) protein is Putative cysteine ligase BshC.